Reading from the N-terminus, the 207-residue chain is MAITIKATKREGKGTSASRRLRRAGNVPGVVYGGDKEAVSLEFNHKELFLEFRHETFHASILNLEVDGQKEQVVLRDYQLHPVRNTIQHIDFQRVSASEKVHVKVPLHFINADIAPGVKLAGGIVTHILTEADVSCLPKDLPEFIEVDLSNLEAGHSIHLSQIKLPNGVEFVQLAHDNDAAVASISKPRGGAGAEGEADAEGEAAAE.

The segment at S186–E207 is disordered. The span at G196–E207 shows a compositional bias: acidic residues.

Belongs to the bacterial ribosomal protein bL25 family. CTC subfamily. Part of the 50S ribosomal subunit; part of the 5S rRNA/L5/L18/L25 subcomplex. Contacts the 5S rRNA. Binds to the 5S rRNA independently of L5 and L18.

This is one of the proteins that binds to the 5S RNA in the ribosome where it forms part of the central protuberance. This chain is Large ribosomal subunit protein bL25, found in Methylobacillus flagellatus (strain ATCC 51484 / DSM 6875 / VKM B-1610 / KT).